A 157-amino-acid chain; its full sequence is Endoribonuclease YbeY (157 aa).

Residues H111, H115, and H121 each coordinate Zn(2+).

It belongs to the endoribonuclease YbeY family. Zn(2+) serves as cofactor.

It localises to the cytoplasm. Its function is as follows. Single strand-specific metallo-endoribonuclease involved in late-stage 70S ribosome quality control and in maturation of the 3' terminus of the 16S rRNA. This chain is Endoribonuclease YbeY, found in Pseudomonas entomophila (strain L48).